The following is a 329-amino-acid chain: Ribosomal protein L11 methyltransferase (329 aa).

S-adenosyl-L-methionine is bound by residues Thr-177, Gly-198, Asp-220, and Asn-264.

This sequence belongs to the methyltransferase superfamily. PrmA family.

It is found in the cytoplasm. It catalyses the reaction L-lysyl-[protein] + 3 S-adenosyl-L-methionine = N(6),N(6),N(6)-trimethyl-L-lysyl-[protein] + 3 S-adenosyl-L-homocysteine + 3 H(+). Its function is as follows. Methylates ribosomal protein L11. The protein is Ribosomal protein L11 methyltransferase of Helicobacter acinonychis (strain Sheeba).